The following is a 324-amino-acid chain: Pseudouridine-5'-phosphate glycosidase (324 aa).

E43 functions as the Proton donor in the catalytic mechanism. 2 residues coordinate substrate: K104 and V124. D156 contacts Mn(2+). S158 to D160 is a binding site for substrate. The Nucleophile role is filled by K177.

This sequence belongs to the pseudouridine-5'-phosphate glycosidase family. As to quaternary structure, homotrimer. The cofactor is Mn(2+).

It carries out the reaction D-ribose 5-phosphate + uracil = psi-UMP + H2O. Its function is as follows. Catalyzes the reversible cleavage of pseudouridine 5'-phosphate (PsiMP) to ribose 5-phosphate and uracil. Functions biologically in the cleavage direction, as part of a pseudouridine degradation pathway. The chain is Pseudouridine-5'-phosphate glycosidase from Salinispora tropica (strain ATCC BAA-916 / DSM 44818 / JCM 13857 / NBRC 105044 / CNB-440).